Reading from the N-terminus, the 373-residue chain is Packaging protein 3 (373 aa).

The tract at residues 1 to 32 is disordered; it reads MHPVLRQMRPQPRATTASAAVALSGSGEQEEP. An interaction with packaging protein 1 region spans residues 1–150; it reads MHPVLRQMRP…VTEERNFQKS (150 aa). Residues serine 52 and serine 334 each carry the phosphoserine; by host modification.

Belongs to the adenoviridae packaging protein 3 family. Part of the genome packaging complex composed of packaging proteins 1, 2 and 3; this complex specifically binds to the packaging sequence on the left end of viral genomic DNA and performs packaging of the viral genome. Interacts with hexon-linking protein IIIa; this interaction is required to promote correct genome packaging. Cleaved at different sites by the viral protease during virion maturation.

Its subcellular location is the host nucleus. Involved in viral genome packaging through its interaction with packaging proteins 1 and 2. After proteolytic cleavage by adenovirus protease, L1 52/55k protein is removed from the capsid during viral maturation. In Homo sapiens (Human), this protein is Packaging protein 3.